The following is a 357-amino-acid chain: Holliday junction branch migration complex subunit RuvB (357 aa).

The disordered stretch occupies residues 1–27; sequence MGRFDDAGAQDAEPDDRDVSPALTVGE. The tract at residues 1 to 195 is large ATPase domain (RuvB-L); sequence MGRFDDAGAQ…FGFTAHMDFY (195 aa). Residues Leu34, Arg35, Gly76, Lys79, Thr80, Ser81, 142 to 144, Arg185, Tyr195, and Arg232 contribute to the ATP site; that span reads EDF. Thr80 is a binding site for Mg(2+). The tract at residues 196–266 is small ATPAse domain (RuvB-S); sequence EPAELERVLA…IAKAALEVYD (71 aa). The segment at 269-357 is head domain (RuvB-H); sequence ELGLDRLDRA…TGLGQTGLFD (89 aa). 2 residues coordinate DNA: Arg324 and Arg329.

The protein belongs to the RuvB family. In terms of assembly, homohexamer. Forms an RuvA(8)-RuvB(12)-Holliday junction (HJ) complex. HJ DNA is sandwiched between 2 RuvA tetramers; dsDNA enters through RuvA and exits via RuvB. An RuvB hexamer assembles on each DNA strand where it exits the tetramer. Each RuvB hexamer is contacted by two RuvA subunits (via domain III) on 2 adjacent RuvB subunits; this complex drives branch migration. In the full resolvosome a probable DNA-RuvA(4)-RuvB(12)-RuvC(2) complex forms which resolves the HJ.

It is found in the cytoplasm. It catalyses the reaction ATP + H2O = ADP + phosphate + H(+). Functionally, the RuvA-RuvB-RuvC complex processes Holliday junction (HJ) DNA during genetic recombination and DNA repair, while the RuvA-RuvB complex plays an important role in the rescue of blocked DNA replication forks via replication fork reversal (RFR). RuvA specifically binds to HJ cruciform DNA, conferring on it an open structure. The RuvB hexamer acts as an ATP-dependent pump, pulling dsDNA into and through the RuvAB complex. RuvB forms 2 homohexamers on either side of HJ DNA bound by 1 or 2 RuvA tetramers; 4 subunits per hexamer contact DNA at a time. Coordinated motions by a converter formed by DNA-disengaged RuvB subunits stimulates ATP hydrolysis and nucleotide exchange. Immobilization of the converter enables RuvB to convert the ATP-contained energy into a lever motion, pulling 2 nucleotides of DNA out of the RuvA tetramer per ATP hydrolyzed, thus driving DNA branch migration. The RuvB motors rotate together with the DNA substrate, which together with the progressing nucleotide cycle form the mechanistic basis for DNA recombination by continuous HJ branch migration. Branch migration allows RuvC to scan DNA until it finds its consensus sequence, where it cleaves and resolves cruciform DNA. This is Holliday junction branch migration complex subunit RuvB from Mycobacterium sp. (strain JLS).